The chain runs to 34 residues: Photosystem II reaction center protein Psb30 (34 aa).

Residues 6–26 traverse the membrane as a helical segment; that stretch reads VIGQLLSATLIVLAGPAVIFV.

The protein belongs to the Psb30/Ycf12 family. In terms of assembly, PSII is composed of 1 copy each of membrane proteins PsbA, PsbB, PsbC, PsbD, PsbE, PsbF, PsbH, PsbI, PsbJ, PsbK, PsbL, PsbM, PsbT, PsbX, PsbY, PsbZ, Psb30/Ycf12, peripheral proteins of the oxygen-evolving complex and a large number of cofactors. It forms dimeric complexes.

Its subcellular location is the plastid. The protein localises to the chloroplast thylakoid membrane. Functionally, a core subunit of photosystem II (PSII), probably helps stabilize the reaction center. This is Photosystem II reaction center protein Psb30 from Heterosigma akashiwo (strain NIES-293 / 8280G21-1).